The sequence spans 486 residues: Histone acetyltransferase type B catalytic subunit DDB_G0274269 (486 aa).

Residues 27–69 (DIEELKNKDNKENKDKENKAHIKDEGEEEEQKEKKEEEEKEDD) are a coiled coil. Basic and acidic residues predominate over residues 33–50 (NKDNKENKDKENKAHIKD). The tract at residues 33-78 (NKDNKENKDKENKAHIKDEGEEEEQKEKKEEEEKEDDGGPISFHPT) is disordered. One can recognise an N-acetyltransferase domain in the interval 189-386 (VVFRYHEKLQ…YRISIKKRLY (198 aa)). Residues 260–262 (YLI) and 267–273 (QRMGHGK) contribute to the acetyl-CoA site. Glutamate 299 functions as the Proton donor/acceptor in the catalytic mechanism. Residues 392–481 (DSEQIEKIKQ…KNYHKTLSSL (90 aa)) are a coiled coil.

This sequence belongs to the HAT1 family.

The catalysed reaction is L-lysyl-[protein] + acetyl-CoA = N(6)-acetyl-L-lysyl-[protein] + CoA + H(+). This is Histone acetyltransferase type B catalytic subunit DDB_G0274269 from Dictyostelium discoideum (Social amoeba).